Here is a 508-residue protein sequence, read N- to C-terminus: MTQTLKYASRVFHRVRWAPELGASLGYREYHSARRSLADIPGPSTPSFLAELFCKGGLSRLHELQVQGAAHFGPVWLASFGTVRTVYVAAPALVEELLRQEGPRPERCSFSPWTEHRRCRQRACGLLTAEGEEWQRLRSLLAPLLLRPQAAARYAGTLNNVVCDLVRRLRRQRGRGTGPPALVRDVAGEFYKFGLEGIAAVLLGSRLGCLEAQVPPDTETFIRAVGSVFVSTLLTMAMPHWLRHLVPGPWGRLCRDWDQMFAFAQRHVERREAEAAMRNGGQPEKDLESGAHLTHFLFREELPAQSILGNVTELLLAGVDTVSNTLSWALYELSRHPEVQTALHSEITAALSPGSSAYPSATVLSQLPLLKAVVKEVLRLYPVVPGNSRVPDKDIHVGDYIIPKNTLVTLCHYATSRDPAQFPEPNSFRPARWLGEGPTPHPFASLPFGFGKRSCMGRRLAELELQMALAQILTHFEVQPEPGAAPVRPKTRTVLVPERSINLQFLDR.

A heme-binding site is contributed by Cys455.

This sequence belongs to the cytochrome P450 family. Heme serves as cofactor. As to expression, kidney.

The protein localises to the mitochondrion membrane. It catalyses the reaction calcidiol + 2 reduced [adrenodoxin] + O2 + 2 H(+) = calcitriol + 2 oxidized [adrenodoxin] + H2O. The catalysed reaction is secalciferol + 2 reduced [adrenodoxin] + O2 + 2 H(+) = calcitetrol + 2 oxidized [adrenodoxin] + H2O. The enzyme catalyses 25-hydroxy-24-oxocalciol + 2 reduced [adrenodoxin] + O2 + 2 H(+) = (1S)-1,25-dihydroxy-24-oxocalciol + 2 oxidized [adrenodoxin] + H2O. It carries out the reaction 25-hydroxyvitamin D2 + 2 reduced [adrenodoxin] + O2 + 2 H(+) = 1alpha,25-dihydroxyvitamin D2 + 2 oxidized [adrenodoxin] + H2O. It functions in the pathway hormone biosynthesis; vitamin D biosynthesis. Activated by cardiolipin and dioleoyl phosphatidylethanolamine (DOPE), phospholipids found in the inner mitochondrial membrane. Inhibited by high substrate concentration. In terms of biological role, a cytochrome P450 monooxygenase involved in vitamin D metabolism and in calcium and phosphorus homeostasis. Catalyzes the rate-limiting step in the activation of vitamin D in the kidney, namely the hydroxylation of 25-hydroxyvitamin D3/calcidiol at the C1alpha-position to form the hormonally active form of vitamin D3, 1alpha,25-dihydroxyvitamin D3/calcitriol that acts via the vitamin D receptor (VDR). Has 1alpha-hydroxylase activity on vitamin D intermediates of the CYP24A1-mediated inactivation pathway. Converts 24R,25-dihydroxyvitamin D3/secalciferol to 1-alpha,24,25-trihydroxyvitamin D3, an active ligand of VDR. Also active on 25-hydroxyvitamin D2. Mechanistically, uses molecular oxygen inserting one oxygen atom into a substrate, and reducing the second into a water molecule, with two electrons provided by NADPH via FDXR/adrenodoxin reductase and FDX1/adrenodoxin. The sequence is that of 25-hydroxyvitamin D-1 alpha hydroxylase, mitochondrial (CYP27B1) from Homo sapiens (Human).